A 145-amino-acid polypeptide reads, in one-letter code: MGKGKPRGLNSARKLRVHRRNNRWADQAYKARLLGTAFKSSPFGGSSHAKGIVLEKIGIESKQPNSAIRKCVRVQLIKNGKKVTAFVPNDGCLNFVDENDEVLLAGFGRRGKAKGDIPGVRFKVVKVSGVSLLALWKEKKEKPRS.

It belongs to the universal ribosomal protein uS12 family. In terms of assembly, component of the small ribosomal subunit. Mature ribosomes consist of a small (40S) and a large (60S) subunit. The 40S subunit contains about 32 different proteins and 1 molecule of RNA (18S). The 60S subunit contains 45 different proteins and 3 molecules of RNA (25S, 5.8S and 5S).

The protein localises to the cytoplasm. Its function is as follows. Component of the ribosome, a large ribonucleoprotein complex responsible for the synthesis of proteins in the cell. The small ribosomal subunit (SSU) binds messenger RNAs (mRNAs) and translates the encoded message by selecting cognate aminoacyl-transfer RNA (tRNA) molecules. The large subunit (LSU) contains the ribosomal catalytic site termed the peptidyl transferase center (PTC), which catalyzes the formation of peptide bonds, thereby polymerizing the amino acids delivered by tRNAs into a polypeptide chain. The nascent polypeptides leave the ribosome through a tunnel in the LSU and interact with protein factors that function in enzymatic processing, targeting, and the membrane insertion of nascent chains at the exit of the ribosomal tunnel. This is Small ribosomal subunit protein uS12 (RPS23A) from Candida albicans (strain SC5314 / ATCC MYA-2876) (Yeast).